We begin with the raw amino-acid sequence, 239 residues long: Type III pantothenate kinase (239 aa).

ATP is bound at residue 6–13 (DAGNTRLK). Residues Tyr-87 and 94–97 (GADR) contribute to the substrate site. Asp-96 functions as the Proton acceptor in the catalytic mechanism. Residue Thr-119 coordinates ATP. Ser-169 provides a ligand contact to substrate.

This sequence belongs to the type III pantothenate kinase family. Homodimer. NH4(+) is required as a cofactor. K(+) serves as cofactor.

Its subcellular location is the cytoplasm. The enzyme catalyses (R)-pantothenate + ATP = (R)-4'-phosphopantothenate + ADP + H(+). Its pathway is cofactor biosynthesis; coenzyme A biosynthesis; CoA from (R)-pantothenate: step 1/5. Its function is as follows. Catalyzes the phosphorylation of pantothenate (Pan), the first step in CoA biosynthesis. The polypeptide is Type III pantothenate kinase (Laribacter hongkongensis (strain HLHK9)).